Consider the following 65-residue polypeptide: U2-theraphotoxin-Pc1a (65 aa).

Positions 1 to 20 are cleaved as a signal peptide; sequence MGFKLVLFIAVLTLVGSSNA. Positions 21–36 are excised as a propeptide; it reads EISAKMDSRDSPMIQE. Intrachain disulfides connect Cys-39/Cys-56, Cys-46/Cys-59, and Cys-55/Cys-64.

It belongs to the neurotoxin 36 family. 02 subfamily. As to expression, expressed by the venom gland.

The protein resides in the secreted. Functionally, possesses strong antiplasmodial activity against the intra-erythrocyte stage of P.falciparum in vitro. IC(50) for inhibiting P.falciparum growth is 1.15 uM. Specifically interacts with infected erythrocytes. Does not lyse erythrocytes, is not cytotoxic to nucleated mammalian cells, and does not inhibit neuromuscular function. Has neither antibacterial nor antifungal activity. This Psalmopoeus cambridgei (Trinidad chevron tarantula) protein is U2-theraphotoxin-Pc1a.